The primary structure comprises 370 residues: Alpha-ketoglutarate-dependent dioxygenase cnsP (370 aa).

The segment covering 1-12 has biased composition (low complexity); the sequence is MSTTTVITPGTI. The disordered stretch occupies residues 1-20; that stretch reads MSTTTVITPGTITREKNENG. His131 contributes to the substrate binding site. The Fe cation site is built by His169 and Asp171. Residue Thr197 participates in 2-oxoglutarate binding. His321 lines the Fe cation pocket. Arg333 and Arg337 together coordinate 2-oxoglutarate. Arg337 contacts substrate.

It belongs to the TfdA dioxygenase family. Requires Fe(2+) as cofactor.

It functions in the pathway alkaloid biosynthesis. In terms of biological role, alpha-ketoglutarate-dependent dioxygenase; part of the gene cluster that mediates the biosynthesis of communesins, a prominent class of indole alkaloids with great potential as pharmaceuticals. Communesins are biosynthesized by the coupling of tryptamine and aurantioclavine, two building blocks derived from L-tryptophan. The L-tryptophan decarboxylase cnsB converts L-tryptophan to tryptamine, whereas the tryptophan dimethylallyltransferase cnsF converts L-tryptophan to 4-dimethylallyl tryptophan which is further transformed to aurantioclavine by the aurantioclavine synthase cnsA, probably aided by the catalase cnsD. The cytochrome P450 monooxygenase cnsC catalyzes the heterodimeric coupling between the two different indole moieties, tryptamine and aurantioclavine, to construct vicinal quaternary stereocenters and yield the heptacyclic communesin scaffold. The O-methyltransferase cnsE then methylates the communesin scaffold to produce communesin K, the simplest characterized communesin that contains the heptacyclic core. The dioxygenase cnsJ converts communesin K into communesin I. Acylation to introduce the hexadienyl group at position N16 of communesin I by the acyltransferase cnsK leads to the production of communesin B. The hexadienyl group is produced by the highly reducing polyketide synthase cnsI, before being hydrolytically removed from cnsI by the serine hydrolase cnsH, converted into hexadienyl-CoA by the CoA ligase cnsG, and then transferred to communesin I by cnsK. Surprisingly, cnsK may also be a promiscuous acyltransferase that can tolerate a range of acyl groups, including acetyl-, propionyl-, and butyryl-CoA, which lead to communesins A, G and H respectively. The roles of the alpha-ketoglutarate-dependent dioxygenases cnsM and cnsP have still to be determined. The polypeptide is Alpha-ketoglutarate-dependent dioxygenase cnsP (Penicillium expansum (Blue mold rot fungus)).